The following is a 249-amino-acid chain: Ubiquinone biosynthesis O-methyltransferase (249 aa).

The tract at residues 1 to 21 (MIPEVSNEASQPAAHRQENVD) is disordered. S-adenosyl-L-methionine is bound by residues R52, G72, D93, and M137.

The protein belongs to the methyltransferase superfamily. UbiG/COQ3 family.

The catalysed reaction is a 3-demethylubiquinol + S-adenosyl-L-methionine = a ubiquinol + S-adenosyl-L-homocysteine + H(+). It catalyses the reaction a 3-(all-trans-polyprenyl)benzene-1,2-diol + S-adenosyl-L-methionine = a 2-methoxy-6-(all-trans-polyprenyl)phenol + S-adenosyl-L-homocysteine + H(+). It functions in the pathway cofactor biosynthesis; ubiquinone biosynthesis. In terms of biological role, O-methyltransferase that catalyzes the 2 O-methylation steps in the ubiquinone biosynthetic pathway. In Sodalis glossinidius (strain morsitans), this protein is Ubiquinone biosynthesis O-methyltransferase.